The following is a 576-amino-acid chain: Arginine--tRNA ligase (576 aa).

The short motif at 122 to 132 (PNVAKQMHVGH) is the 'HIGH' region element.

It belongs to the class-I aminoacyl-tRNA synthetase family. Monomer.

It is found in the cytoplasm. It carries out the reaction tRNA(Arg) + L-arginine + ATP = L-arginyl-tRNA(Arg) + AMP + diphosphate. The polypeptide is Arginine--tRNA ligase (Yersinia enterocolitica serotype O:8 / biotype 1B (strain NCTC 13174 / 8081)).